The following is a 177-amino-acid chain: Dual-action ribosomal maturation protein DarP (177 aa).

The protein belongs to the DarP family.

It localises to the cytoplasm. In terms of biological role, member of a network of 50S ribosomal subunit biogenesis factors which assembles along the 30S-50S interface, preventing incorrect 23S rRNA structures from forming. Promotes peptidyl transferase center (PTC) maturation. The protein is Dual-action ribosomal maturation protein DarP of Histophilus somni (strain 2336) (Haemophilus somnus).